A 133-amino-acid chain; its full sequence is UPF0225 protein BP2036 (133 aa).

It belongs to the UPF0225 family.

The protein is UPF0225 protein BP2036 of Bordetella pertussis (strain Tohama I / ATCC BAA-589 / NCTC 13251).